The following is a 236-amino-acid chain: V-set and transmembrane domain-containing protein 1 (236 aa).

The first 16 residues, 1 to 16, serve as a signal peptide directing secretion; sequence MTAEFLSLLCLGLCLG. Over 17–135 the chain is Extracellular; the sequence is YEDEKKNEKP…APSMKTDTRT (119 aa). Residues 27 to 114 enclose the Ig-like V-type domain; it reads PKPSLHAWPS…EWSESSEHLQ (88 aa). N-linked (GlcNAc...) asparagine glycans are attached at residues Asn-44 and Asn-55. Cys-49 and Cys-96 form a disulfide bridge. The chain crosses the membrane as a helical span at residues 136-156; sequence IFVAIFSCISILLLFLSVFII. At 157–236 the chain is on the cytoplasmic side; sequence YRCSQHSSSS…GSHEYAALKV (80 aa). Positions 166–200 are disordered; that stretch reads SEESTKRTSHSKLPEQEAAEADLSNMERVSLSTAD. Short sequence motifs (ITIM motif) lie at residues 204 to 209 and 229 to 234; these read VTYAEL and HEYAAL. The interval 215-236 is disordered; that stretch reads SEAASDTTQEPPGSHEYAALKV.

In terms of processing, isoform 2 is N-glycosylated. As to expression, expressed on myeloid (neutrophils, eosinophils and monocytes) but not on lymphoid cells.

Its subcellular location is the membrane. The protein resides in the secreted. Its function is as follows. Behaves as a cytokine, promoting IL17A secretion by CD4+ T-cells, and differentiation and activation of IL17 producing helper T-cells (TH17). In terms of biological role, inhibitory immune receptor involved in the regulation of phagocytes. The chain is V-set and transmembrane domain-containing protein 1 (VSTM1) from Homo sapiens (Human).